Reading from the N-terminus, the 213-residue chain is ATP-dependent Clp protease proteolytic subunit 3 (213 aa).

Catalysis depends on Ser-107, which acts as the Nucleophile. His-132 is an active-site residue.

It belongs to the peptidase S14 family. Fourteen ClpP subunits assemble into 2 heptameric rings which stack back to back to give a disk-like structure with a central cavity, resembling the structure of eukaryotic proteasomes.

It localises to the cytoplasm. It catalyses the reaction Hydrolysis of proteins to small peptides in the presence of ATP and magnesium. alpha-casein is the usual test substrate. In the absence of ATP, only oligopeptides shorter than five residues are hydrolyzed (such as succinyl-Leu-Tyr-|-NHMec, and Leu-Tyr-Leu-|-Tyr-Trp, in which cleavage of the -Tyr-|-Leu- and -Tyr-|-Trp bonds also occurs).. In terms of biological role, cleaves peptides in various proteins in a process that requires ATP hydrolysis. Has a chymotrypsin-like activity. Plays a major role in the degradation of misfolded proteins. In Frankia casuarinae (strain DSM 45818 / CECT 9043 / HFP020203 / CcI3), this protein is ATP-dependent Clp protease proteolytic subunit 3.